The sequence spans 428 residues: Small ribosomal subunit protein uS2m (428 aa).

A disordered region spans residues 30-50 (FLSQDNFTAPPPPPTNSKKQA).

This sequence belongs to the universal ribosomal protein uS2 family. In terms of assembly, component of the mitochondrial small ribosomal subunit (mt-SSU). Mature N.crassa 74S mitochondrial ribosomes consist of a small (37S) and a large (54S) subunit. The 37S small subunit contains a 16S ribosomal RNA (16S mt-rRNA) and 32 different proteins. The 54S large subunit contains a 23S rRNA (23S mt-rRNA) and 42 different proteins.

Its subcellular location is the mitochondrion. In terms of biological role, component of the mitochondrial ribosome (mitoribosome), a dedicated translation machinery responsible for the synthesis of mitochondrial genome-encoded proteins, including at least some of the essential transmembrane subunits of the mitochondrial respiratory chain. The mitoribosomes are attached to the mitochondrial inner membrane and translation products are cotranslationally integrated into the membrane. The polypeptide is Small ribosomal subunit protein uS2m (mrp4) (Neurospora crassa (strain ATCC 24698 / 74-OR23-1A / CBS 708.71 / DSM 1257 / FGSC 987)).